We begin with the raw amino-acid sequence, 332 residues long: Fructose-1,6-bisphosphatase class 1 (332 aa).

Mg(2+)-binding residues include Glu-89, Asp-110, Leu-112, and Asp-113. Substrate is bound by residues 113-116, Asn-206, Tyr-239, 257-259, and Lys-269; these read DGSS and YLY. A Mg(2+)-binding site is contributed by Glu-275.

The protein belongs to the FBPase class 1 family. In terms of assembly, homotetramer. It depends on Mg(2+) as a cofactor.

It localises to the cytoplasm. It carries out the reaction beta-D-fructose 1,6-bisphosphate + H2O = beta-D-fructose 6-phosphate + phosphate. It participates in carbohydrate biosynthesis; gluconeogenesis. This is Fructose-1,6-bisphosphatase class 1 from Salmonella arizonae (strain ATCC BAA-731 / CDC346-86 / RSK2980).